A 360-amino-acid polypeptide reads, in one-letter code: E3 ubiquitin-protein ligase RNF146 (360 aa).

The RING-type zinc finger occupies 37–75; that stretch reads CAICLQTCVHPVSLPCKHVFCYLCVKGASWLGKRCALCR. Glycyl lysine isopeptide (Lys-Gly) (interchain with G-Cter in ubiquitin) cross-links involve residues Lys-85 and Lys-95. In terms of domain architecture, WWE spans 92 to 168; it reads EELKAASRGN…EHGRRRKIKR (77 aa). Residues Tyr-108, Arg-111, and Trp-115 each coordinate a glycoprotein. Residue Lys-131 forms a Glycyl lysine isopeptide (Lys-Gly) (interchain with G-Cter in ubiquitin) linkage. Positions 145, 154, 164, and 176 each coordinate a glycoprotein. A Glycyl lysine isopeptide (Lys-Gly) (interchain with G-Cter in ubiquitin) cross-link involves residue Lys-176. The tract at residues 259-360 is disordered; the sequence is ERSHRGEGEE…PDGQCTVTEV (102 aa). Over residues 284 to 294 the composition is skewed to acidic residues; it reads SIEETESDASS. Phosphoserine occurs at positions 290 and 294. Positions 295–305 are enriched in low complexity; that stretch reads DSENVSSAVVA. The segment covering 307 to 333 has biased composition (polar residues); that stretch reads HSLTQQRLLVSNANQTVSDRSDQSGTD.

Can form homooligomers. Interacts with PARsylated AXIN1, AXIN2, BLZF1, CASC3, H1-2, IPO7, LIG3, NCL, PARP1, XRCC1, XRCC5 and XRCC6. Interacts with DDB1, DHX15, IQGAP1, LRPPRC, PARP2, PRKDC, RUVBL2, TNKS1 and TNKS2. Binding often leads to interactor ubiquitination, in the presence of the appropriate E1 and E2 enzymes, and proteasomal degradation. Ubiquitinated; autoubiquitinated. Autoubiquitination is enhanced upon poly(ADP-ribose)-binding.

It is found in the cytoplasm. It localises to the cytosol. The protein resides in the nucleus. It catalyses the reaction S-ubiquitinyl-[E2 ubiquitin-conjugating enzyme]-L-cysteine + [acceptor protein]-L-lysine = [E2 ubiquitin-conjugating enzyme]-L-cysteine + N(6)-ubiquitinyl-[acceptor protein]-L-lysine.. It functions in the pathway protein modification; protein ubiquitination. Functionally, E3 ubiquitin-protein ligase that specifically binds poly-ADP-ribosylated (PARsylated) proteins and mediates their ubiquitination and subsequent degradation. May regulate many important biological processes, such as cell survival and DNA damage response. Acts as an activator of the Wnt signaling pathway by mediating the ubiquitination of PARsylated AXIN1 and AXIN2, 2 key components of the beta-catenin destruction complex. Acts in cooperation with tankyrase proteins (TNKS and TNKS2), which mediate PARsylation of target proteins AXIN1, AXIN2, BLZF1, CASC3, TNKS and TNKS2. Recognizes and binds tankyrase-dependent PARsylated proteins via its WWE domain and mediates their ubiquitination, leading to their degradation. Different ubiquitin linkage types have been observed: TNKS2 undergoes ubiquitination at 'Lys-48' and 'Lys-63', while AXIN1 is only ubiquitinated at 'Lys-48'. May regulate TNKS and TNKS2 subcellular location, preventing aggregation at a centrosomal location. Neuroprotective protein. Protects the brain against N-methyl-D-aspartate (NMDA) receptor-mediated glutamate excitotoxicity and ischemia, by interfering with PAR-induced cell death, called parthanatos. Prevents nuclear translocation of AIFM1 in a PAR-binding dependent manner. Does not affect PARP1 activation. Protects against cell death induced by DNA damaging agents, such as N-methyl-N-nitro-N-nitrosoguanidine (MNNG) and rescues cells from G1 arrest. Promotes cell survival after gamma-irradiation. Facilitates DNA repair. In Macaca fascicularis (Crab-eating macaque), this protein is E3 ubiquitin-protein ligase RNF146 (RNF146).